Consider the following 123-residue polypeptide: MKELLIIGIGGFIGAILRYVISGIIPAKFGIPTGTFIVNLIGSFIVGFVMYSSTVIDISPEYRLLIITGFCGALTTFSTFSYETFSLIENNEHIKFLTNIFINVMGCLIMIYVGRIMSLTILR.

4 helical membrane passes run 5–25, 29–49, 65–85, and 94–114; these read LIIG…SGII, FGIP…VGFV, LIIT…YETF, and IKFL…IYVG. Residues Gly72 and Thr75 each contribute to the Na(+) site.

The protein belongs to the fluoride channel Fluc/FEX (TC 1.A.43) family.

The protein localises to the cell membrane. The catalysed reaction is fluoride(in) = fluoride(out). With respect to regulation, na(+) is not transported, but it plays an essential structural role and its presence is essential for fluoride channel function. Fluoride-specific ion channel. Important for reducing fluoride concentration in the cell, thus reducing its toxicity. This Methanococcus aeolicus (strain ATCC BAA-1280 / DSM 17508 / OCM 812 / Nankai-3) protein is Fluoride-specific ion channel FluC.